The primary structure comprises 419 residues: UDP-N-acetylglucosamine 1-carboxyvinyltransferase (419 aa).

K22–N23 is a phosphoenolpyruvate binding site. Residue R95 participates in UDP-N-acetyl-alpha-D-glucosamine binding. Catalysis depends on C119, which acts as the Proton donor. C119 bears the 2-(S-cysteinyl)pyruvic acid O-phosphothioketal mark. Residues K164–V167, D308, and I330 each bind UDP-N-acetyl-alpha-D-glucosamine.

It belongs to the EPSP synthase family. MurA subfamily.

Its subcellular location is the cytoplasm. It catalyses the reaction phosphoenolpyruvate + UDP-N-acetyl-alpha-D-glucosamine = UDP-N-acetyl-3-O-(1-carboxyvinyl)-alpha-D-glucosamine + phosphate. It participates in cell wall biogenesis; peptidoglycan biosynthesis. Cell wall formation. Adds enolpyruvyl to UDP-N-acetylglucosamine. This Rickettsia prowazekii (strain Madrid E) protein is UDP-N-acetylglucosamine 1-carboxyvinyltransferase.